The sequence spans 357 residues: Vomeronasal type-1 receptor 5 (357 aa).

The Extracellular portion of the chain corresponds to 1–3; the sequence is MLK. Residues 4–24 form a helical membrane-spanning segment; it reads LVIIENMAEIMLFSLDLLLFS. Over 25-52 the chain is Cytoplasmic; the sequence is TDILCFNFPSKMIKLPGFITIQIFFYPQ. The helical transmembrane segment at 53–73 threads the bilayer; that stretch reads ASFGISANTILFLFHIFTFVF. Residues 74 to 81 lie on the Extracellular side of the membrane; the sequence is SHRSKSID. A helical membrane pass occupies residues 82–102; that stretch reads MIISHLSLIHILLLFTQAILV. Over 103–130 the chain is Cytoplasmic; that stretch reads SLDFFGSQNTQDDLRCKVIVFLNKVMRG. Residues 131–151 form a helical membrane-spanning segment; sequence LSICTPCLLNVLQAIISPSIF. Residues 152–163 lie on the Extracellular side of the membrane; that stretch reads SLAKLKHPSASH. Residues 164 to 184 traverse the membrane as a helical segment; that stretch reads ILGFFLFSWVLNMFIGVIFCC. Over 185–269 the chain is Cytoplasmic; sequence TLWLPPVKWG…PVSPVKRASQ (85 aa). The helical transmembrane segment at 270–290 threads the bilayer; that stretch reads TILLLVSFVFIYWVDFMFSFS. Residues 291-300 lie on the Extracellular side of the membrane; sequence RGVTWINDSL. N-linked (GlcNAc...) asparagine glycosylation is present at Asn297. The helical transmembrane segment at 301–321 threads the bilayer; sequence LVWFQVIVANSYATISPLMLI. At 322–357 the chain is on the cytoplasmic side; the sequence is YADNQIFKTLQMLWFKYLSPPKLMLKFNRQCGSTKK.

Belongs to the G-protein coupled receptor 1 family.

It is found in the cell membrane. Putative pheromone receptor. The polypeptide is Vomeronasal type-1 receptor 5 (VN1R5) (Gorilla gorilla gorilla (Western lowland gorilla)).